Reading from the N-terminus, the 293-residue chain is Formamidopyrimidine-DNA glycosylase (293 aa).

P2 (schiff-base intermediate with DNA) is an active-site residue. The active-site Proton donor is E3. The active-site Proton donor; for beta-elimination activity is K58. DNA is bound by residues H104, R123, and R166. The segment at 257-293 (AVYDREGEPCRSKGCDGVVKRFVQNGRSTFWCPKCQK) adopts an FPG-type zinc-finger fold. R283 serves as the catalytic Proton donor; for delta-elimination activity.

The protein belongs to the FPG family. In terms of assembly, monomer. It depends on Zn(2+) as a cofactor.

It carries out the reaction Hydrolysis of DNA containing ring-opened 7-methylguanine residues, releasing 2,6-diamino-4-hydroxy-5-(N-methyl)formamidopyrimidine.. It catalyses the reaction 2'-deoxyribonucleotide-(2'-deoxyribose 5'-phosphate)-2'-deoxyribonucleotide-DNA = a 3'-end 2'-deoxyribonucleotide-(2,3-dehydro-2,3-deoxyribose 5'-phosphate)-DNA + a 5'-end 5'-phospho-2'-deoxyribonucleoside-DNA + H(+). In terms of biological role, involved in base excision repair of DNA damaged by oxidation or by mutagenic agents. Acts as a DNA glycosylase that recognizes and removes damaged bases. Has a preference for oxidized purines, such as 7,8-dihydro-8-oxoguanine (8-oxoG). Has AP (apurinic/apyrimidinic) lyase activity and introduces nicks in the DNA strand. Cleaves the DNA backbone by beta-delta elimination to generate a single-strand break at the site of the removed base with both 3'- and 5'-phosphates. The sequence is that of Formamidopyrimidine-DNA glycosylase from Rhodopseudomonas palustris (strain BisB18).